The chain runs to 575 residues: Interleukin-10 receptor subunit alpha (575 aa).

An N-terminal signal peptide occupies residues 1–16; sequence MLSRLLPFLVTISSLS. Over 17-241 the chain is Extracellular; sequence LEFIAYGTEL…QYFTVTNLSI (225 aa). 4 N-linked (GlcNAc...) asparagine glycosylation sites follow: Asn-50, Asn-66, Asn-113, and Asn-182. Cys-204 and Cys-225 form a disulfide bridge. Asn-238 carries an N-linked (GlcNAc...) asparagine glycan. The chain crosses the membrane as a helical span at residues 242 to 262; that stretch reads LVISMLLFCGILVCLVLQWYI. Topologically, residues 263-575 are cytoplasmic; that stretch reads RHPGKLPTVL…PLISSLQVEE (313 aa). Phosphotyrosine occurs at positions 443 and 493.

This sequence belongs to the type II cytokine receptor family. As to quaternary structure, interacts with IL10. Interacts with IL10RB. Interacts (via its cytoplasmic domain) with JAK1 (via N-terminus). Interacts with BTRC; this interaction leads to IL10RA ubiquitination and subsequent degradation. Interacts with STAT3. Phosphorylated. Phosphorylation of the cytoplasmic tail induced STAT3 activation. Post-translationally, ubiquitinated by BTRC; ubiquitination leads to endocytosis and subsequent degradation of IL10RA.

It localises to the cell membrane. The protein resides in the cytoplasm. Functionally, cell surface receptor for the cytokine IL10 that participates in IL10-mediated anti-inflammatory functions, limiting excessive tissue disruption caused by inflammation. Upon binding to IL10, induces a conformational change in IL10RB, allowing IL10RB to bind IL10 as well. In turn, the heterotetrameric assembly complex, composed of two subunits of IL10RA and IL10RB, activates the kinases JAK1 and TYK2 that are constitutively associated with IL10RA and IL10RB respectively. These kinases then phosphorylate specific tyrosine residues in the intracellular domain in IL10RA leading to the recruitment and subsequent phosphorylation of STAT3. Once phosphorylated, STAT3 homodimerizes, translocates to the nucleus and activates the expression of anti-inflammatory genes. In addition, IL10RA-mediated activation of STAT3 inhibits starvation-induced autophagy. This is Interleukin-10 receptor subunit alpha (Il10ra) from Mus musculus (Mouse).